We begin with the raw amino-acid sequence, 284 residues long: Bifunctional protein FolD (284 aa).

NADP(+)-binding positions include 164–166 and S189; that span reads GRS.

The protein belongs to the tetrahydrofolate dehydrogenase/cyclohydrolase family. Homodimer.

The enzyme catalyses (6R)-5,10-methylene-5,6,7,8-tetrahydrofolate + NADP(+) = (6R)-5,10-methenyltetrahydrofolate + NADPH. The catalysed reaction is (6R)-5,10-methenyltetrahydrofolate + H2O = (6R)-10-formyltetrahydrofolate + H(+). It functions in the pathway one-carbon metabolism; tetrahydrofolate interconversion. Catalyzes the oxidation of 5,10-methylenetetrahydrofolate to 5,10-methenyltetrahydrofolate and then the hydrolysis of 5,10-methenyltetrahydrofolate to 10-formyltetrahydrofolate. This chain is Bifunctional protein FolD, found in Listeria monocytogenes serotype 4a (strain HCC23).